Reading from the N-terminus, the 479-residue chain is Ribosomal protein uS12 methylthiotransferase RimO (479 aa).

The tract at residues 1-34 (MTVNTFDPSKASPVTHASDSASKTPEPNAVAAPS) is disordered. A compositionally biased stretch (polar residues) spans 15-25 (THASDSASKTP). An MTTase N-terminal domain is found at 39–151 (NRVGFVSLGC…VMGAVHGYIP (113 aa)). Residues Cys-48, Cys-84, Cys-113, Cys-184, Cys-188, and Cys-191 each contribute to the [4Fe-4S] cluster site. The Radical SAM core domain occupies 170 to 407 (LTPRHYAYLK…METQQAISAA (238 aa)). A TRAM domain is found at 410–476 (KQKVGYEMDV…DYDLTGIAVE (67 aa)).

This sequence belongs to the methylthiotransferase family. RimO subfamily. [4Fe-4S] cluster is required as a cofactor.

It is found in the cytoplasm. It carries out the reaction L-aspartate(89)-[ribosomal protein uS12]-hydrogen + (sulfur carrier)-SH + AH2 + 2 S-adenosyl-L-methionine = 3-methylsulfanyl-L-aspartate(89)-[ribosomal protein uS12]-hydrogen + (sulfur carrier)-H + 5'-deoxyadenosine + L-methionine + A + S-adenosyl-L-homocysteine + 2 H(+). Functionally, catalyzes the methylthiolation of an aspartic acid residue of ribosomal protein uS12. This Saccharophagus degradans (strain 2-40 / ATCC 43961 / DSM 17024) protein is Ribosomal protein uS12 methylthiotransferase RimO.